We begin with the raw amino-acid sequence, 156 residues long: 6,7-dimethyl-8-ribityllumazine synthase (156 aa).

Residues Phe-22, Ala-56–Glu-58, and Ala-80–Ile-82 contribute to the 5-amino-6-(D-ribitylamino)uracil site. Ser-85–Thr-86 contributes to the (2S)-2-hydroxy-3-oxobutyl phosphate binding site. His-88 acts as the Proton donor in catalysis. Phe-113 is a 5-amino-6-(D-ribitylamino)uracil binding site. Arg-127 is a (2S)-2-hydroxy-3-oxobutyl phosphate binding site.

The protein belongs to the DMRL synthase family.

It carries out the reaction (2S)-2-hydroxy-3-oxobutyl phosphate + 5-amino-6-(D-ribitylamino)uracil = 6,7-dimethyl-8-(1-D-ribityl)lumazine + phosphate + 2 H2O + H(+). It participates in cofactor biosynthesis; riboflavin biosynthesis; riboflavin from 2-hydroxy-3-oxobutyl phosphate and 5-amino-6-(D-ribitylamino)uracil: step 1/2. Catalyzes the formation of 6,7-dimethyl-8-ribityllumazine by condensation of 5-amino-6-(D-ribitylamino)uracil with 3,4-dihydroxy-2-butanone 4-phosphate. This is the penultimate step in the biosynthesis of riboflavin. This is 6,7-dimethyl-8-ribityllumazine synthase from Caldicellulosiruptor saccharolyticus (strain ATCC 43494 / DSM 8903 / Tp8T 6331).